The following is a 732-amino-acid chain: Lanosterol synthase (732 aa).

Residue Thr2 is modified to N-acetylthreonine. PFTB repeat units follow at residues 77 to 121 (ALNG…PLPA), 124 to 165 (REEI…RILG), 424 to 468 (PDNP…LLLQ), 483 to 528 (LCDA…MIDY), 560 to 600 (LTQG…ACMG), 612 to 653 (VSRA…HNTC), and 670 to 712 (QERG…NIFP). The active-site Proton donor is the Asp455.

It belongs to the terpene cyclase/mutase family. In terms of assembly, monomer. Widely expressed. Expressed in the hair bulb, the outer root sheath and hair matrix of the hair follicle epithelium. Also detected in dermal papilla, epidermis, sweat glands, sebaceous glands, and blood vessels.

It localises to the endoplasmic reticulum membrane. It catalyses the reaction (S)-2,3-epoxysqualene = lanosterol. It functions in the pathway terpene metabolism; lanosterol biosynthesis; lanosterol from farnesyl diphosphate: step 3/3. Functionally, key enzyme in the cholesterol biosynthesis pathway. Catalyzes the cyclization of (S)-2,3 oxidosqualene to lanosterol, a reaction that forms the sterol nucleus. Through the production of lanosterol may regulate lens protein aggregation and increase transparency. This is Lanosterol synthase (LSS) from Homo sapiens (Human).